Here is a 257-residue protein sequence, read N- to C-terminus: Phosphonates import ATP-binding protein PhnC (257 aa).

The 245-residue stretch at 4-248 (IEFKNVSKVY…IFSEIYGRTI (245 aa)) folds into the ABC transporter domain. 37–44 (GLSGAGKS) lines the ATP pocket.

Belongs to the ABC transporter superfamily. Phosphonates importer (TC 3.A.1.9.1) family. In terms of assembly, the complex is composed of two ATP-binding proteins (PhnC), two transmembrane proteins (PhnE) and a solute-binding protein (PhnD).

It is found in the cell membrane. The enzyme catalyses phosphonate(out) + ATP + H2O = phosphonate(in) + ADP + phosphate + H(+). In terms of biological role, part of the ABC transporter complex PhnCDE involved in phosphonates import. Responsible for energy coupling to the transport system. In Staphylococcus aureus (strain bovine RF122 / ET3-1), this protein is Phosphonates import ATP-binding protein PhnC.